Consider the following 370-residue polypeptide: Flagellar P-ring protein (370 aa).

The N-terminal stretch at 1-28 (MTFFTRCFRRGALLFLLAVLLLPSPAQA) is a signal peptide.

It belongs to the FlgI family. The basal body constitutes a major portion of the flagellar organelle and consists of four rings (L,P,S, and M) mounted on a central rod.

Its subcellular location is the periplasm. The protein resides in the bacterial flagellum basal body. Its function is as follows. Assembles around the rod to form the L-ring and probably protects the motor/basal body from shearing forces during rotation. The sequence is that of Flagellar P-ring protein from Oleidesulfovibrio alaskensis (strain ATCC BAA-1058 / DSM 17464 / G20) (Desulfovibrio alaskensis).